Reading from the N-terminus, the 229-residue chain is 2-C-methyl-D-erythritol 4-phosphate cytidylyltransferase (229 aa).

It belongs to the IspD/TarI cytidylyltransferase family. IspD subfamily.

It carries out the reaction 2-C-methyl-D-erythritol 4-phosphate + CTP + H(+) = 4-CDP-2-C-methyl-D-erythritol + diphosphate. The protein operates within isoprenoid biosynthesis; isopentenyl diphosphate biosynthesis via DXP pathway; isopentenyl diphosphate from 1-deoxy-D-xylulose 5-phosphate: step 2/6. Its function is as follows. Catalyzes the formation of 4-diphosphocytidyl-2-C-methyl-D-erythritol from CTP and 2-C-methyl-D-erythritol 4-phosphate (MEP). This Clostridium botulinum (strain 657 / Type Ba4) protein is 2-C-methyl-D-erythritol 4-phosphate cytidylyltransferase.